Here is a 414-residue protein sequence, read N- to C-terminus: Collagenase (414 aa).

It belongs to the peptidase U32 family. In terms of assembly, homodimer. It depends on a metal cation as a cofactor.

Its function is as follows. Has collagenase activity. Hydrolyzes type I collagen. May play a role in virulence. The chain is Collagenase (prtC) from Porphyromonas gingivalis (strain ATCC BAA-308 / W83).